Here is a 194-residue protein sequence, read N- to C-terminus: RNA polymerase II subunit A C-terminal domain phosphatase SSU72 like protein 1 (194 aa).

The protein belongs to the SSU72 phosphatase family.

The protein resides in the nucleus. It carries out the reaction O-phospho-L-seryl-[protein] + H2O = L-seryl-[protein] + phosphate. The catalysed reaction is O-phospho-L-threonyl-[protein] + H2O = L-threonyl-[protein] + phosphate. In terms of biological role, protein phosphatase that catalyzes the dephosphorylation of the C-terminal domain of RNA polymerase II. Plays a role in RNA processing and termination. The chain is RNA polymerase II subunit A C-terminal domain phosphatase SSU72 like protein 1 from Homo sapiens (Human).